We begin with the raw amino-acid sequence, 345 residues long: Anthranilate phosphoribosyltransferase (345 aa).

5-phospho-alpha-D-ribose 1-diphosphate contacts are provided by residues Gly88, 91 to 92 (GD), Thr96, 98 to 101 (NIST), 116 to 124 (KHGNRSASG), and Ser128. Gly88 serves as a coordination point for anthranilate. Residue Ser100 participates in Mg(2+) binding. Anthranilate is bound at residue Asn119. Arg174 lines the anthranilate pocket. Mg(2+)-binding residues include Asp233 and Glu234.

Belongs to the anthranilate phosphoribosyltransferase family. In terms of assembly, homodimer. Requires Mg(2+) as cofactor.

The enzyme catalyses N-(5-phospho-beta-D-ribosyl)anthranilate + diphosphate = 5-phospho-alpha-D-ribose 1-diphosphate + anthranilate. The protein operates within amino-acid biosynthesis; L-tryptophan biosynthesis; L-tryptophan from chorismate: step 2/5. Functionally, catalyzes the transfer of the phosphoribosyl group of 5-phosphorylribose-1-pyrophosphate (PRPP) to anthranilate to yield N-(5'-phosphoribosyl)-anthranilate (PRA). This is Anthranilate phosphoribosyltransferase from Prochlorococcus marinus (strain NATL1A).